Consider the following 228-residue polypeptide: Cytochrome c oxidase subunit 2 (228 aa).

The Mitochondrial intermembrane segment spans residues 1 to 14; the sequence is MANHSQLGFQDASS. The chain crosses the membrane as a helical span at residues 15-45; that stretch reads PIMEELVEFHDHALIVALAICSLVLYLLAHM. Residues 46–58 are Mitochondrial matrix-facing; the sequence is LMEKLSSNAVDAQ. Residues 59–86 traverse the membrane as a helical segment; the sequence is EVELIWTILPAIVLVLLALPSLQILYMM. Topologically, residues 87-228 are mitochondrial intermembrane; it reads DEIDEPDLTL…ETWSSLLSAS (142 aa). His-160, Cys-195, Glu-197, Cys-199, His-203, and Met-206 together coordinate Cu cation. Mg(2+) is bound at residue Glu-197.

It belongs to the cytochrome c oxidase subunit 2 family. In terms of assembly, component of the cytochrome c oxidase (complex IV, CIV), a multisubunit enzyme composed of 14 subunits. The complex is composed of a catalytic core of 3 subunits MT-CO1, MT-CO2 and MT-CO3, encoded in the mitochondrial DNA, and 11 supernumerary subunits COX4I, COX5A, COX5B, COX6A, COX6B, COX6C, COX7A, COX7B, COX7C, COX8 and NDUFA4, which are encoded in the nuclear genome. The complex exists as a monomer or a dimer and forms supercomplexes (SCs) in the inner mitochondrial membrane with NADH-ubiquinone oxidoreductase (complex I, CI) and ubiquinol-cytochrome c oxidoreductase (cytochrome b-c1 complex, complex III, CIII), resulting in different assemblies (supercomplex SCI(1)III(2)IV(1) and megacomplex MCI(2)III(2)IV(2)). Found in a complex with TMEM177, COA6, COX18, COX20, SCO1 and SCO2. Interacts with TMEM177 in a COX20-dependent manner. Interacts with COX20. Interacts with COX16. It depends on Cu cation as a cofactor.

It is found in the mitochondrion inner membrane. It carries out the reaction 4 Fe(II)-[cytochrome c] + O2 + 8 H(+)(in) = 4 Fe(III)-[cytochrome c] + 2 H2O + 4 H(+)(out). Its function is as follows. Component of the cytochrome c oxidase, the last enzyme in the mitochondrial electron transport chain which drives oxidative phosphorylation. The respiratory chain contains 3 multisubunit complexes succinate dehydrogenase (complex II, CII), ubiquinol-cytochrome c oxidoreductase (cytochrome b-c1 complex, complex III, CIII) and cytochrome c oxidase (complex IV, CIV), that cooperate to transfer electrons derived from NADH and succinate to molecular oxygen, creating an electrochemical gradient over the inner membrane that drives transmembrane transport and the ATP synthase. Cytochrome c oxidase is the component of the respiratory chain that catalyzes the reduction of oxygen to water. Electrons originating from reduced cytochrome c in the intermembrane space (IMS) are transferred via the dinuclear copper A center (CU(A)) of subunit 2 and heme A of subunit 1 to the active site in subunit 1, a binuclear center (BNC) formed by heme A3 and copper B (CU(B)). The BNC reduces molecular oxygen to 2 water molecules using 4 electrons from cytochrome c in the IMS and 4 protons from the mitochondrial matrix. The protein is Cytochrome c oxidase subunit 2 (MT-CO2) of Cairina moschata (Muscovy duck).